We begin with the raw amino-acid sequence, 261 residues long: 2-phytyl-1,4-beta-naphthoquinone methyltransferase, chloroplastic (261 aa).

The N-terminal 30 residues, M1–K30, are a transit peptide targeting the chloroplast.

The protein belongs to the class I-like SAM-binding methyltransferase superfamily. MenG/UbiE family.

It is found in the plastid. Its subcellular location is the chloroplast. The enzyme catalyses demethylphylloquinol + S-adenosyl-L-methionine = phylloquinol + S-adenosyl-L-homocysteine + H(+). Functionally, involved in the biosynthesis of phylloquinone (vitamin K1). Methyltransferase required for the conversion of 2-phytyl-1,4-beta-naphthoquinol to phylloquinol. The protein is 2-phytyl-1,4-beta-naphthoquinone methyltransferase, chloroplastic of Arabidopsis thaliana (Mouse-ear cress).